The primary structure comprises 225 residues: KDP operon transcriptional regulatory protein KdpE (225 aa).

One can recognise a Response regulatory domain in the interval 3–116; it reads NVLIVEDEQA…ELQARLRVAL (114 aa). Aspartate 52 carries the post-translational modification 4-aspartylphosphate. Residues 126-225 constitute a DNA-binding region (ompR/PhoB-type); it reads DPLVKFSDVT…ETGIGYRFML (100 aa).

Phosphorylated by KdpD.

It is found in the cytoplasm. Functionally, member of the two-component regulatory system KdpD/KdpE involved in the regulation of the kdp operon. This is KDP operon transcriptional regulatory protein KdpE (kdpE) from Escherichia coli (strain K12).